The primary structure comprises 324 residues: Elongation factor P--(R)-beta-lysine ligase (324 aa).

A substrate-binding site is contributed by 75-77 (SPE). Residues 99–101 (RNE) and Asn108 contribute to the ATP site. Tyr117 serves as a coordination point for substrate. 243–244 (EL) lines the ATP pocket. Position 250 (Glu250) interacts with substrate. Residue Gly299 coordinates ATP.

Belongs to the class-II aminoacyl-tRNA synthetase family. EpmA subfamily. As to quaternary structure, homodimer.

The enzyme catalyses D-beta-lysine + L-lysyl-[protein] + ATP = N(6)-((3R)-3,6-diaminohexanoyl)-L-lysyl-[protein] + AMP + diphosphate + H(+). In terms of biological role, with EpmB is involved in the beta-lysylation step of the post-translational modification of translation elongation factor P (EF-P). Catalyzes the ATP-dependent activation of (R)-beta-lysine produced by EpmB, forming a lysyl-adenylate, from which the beta-lysyl moiety is then transferred to the epsilon-amino group of a conserved specific lysine residue in EF-P. The chain is Elongation factor P--(R)-beta-lysine ligase from Pseudoalteromonas translucida (strain TAC 125).